The sequence spans 185 residues: Ribosome-recycling factor (185 aa).

Belongs to the RRF family.

Its subcellular location is the cytoplasm. Functionally, responsible for the release of ribosomes from messenger RNA at the termination of protein biosynthesis. May increase the efficiency of translation by recycling ribosomes from one round of translation to another. The polypeptide is Ribosome-recycling factor (Bacillus pumilus (strain SAFR-032)).